Consider the following 271-residue polypeptide: uncharacterized protein (271 aa).

Positions 1-18 (MKGFFLIAGFLLFARALC) are cleaved as a signal peptide. Residues 19–187 (ASWNVEEGTL…FSPPPKRANY (169 aa)) lie on the Lumenal side of the membrane. Residues 188-208 (FLSICFSVSVVVSLIGLLGVW) form a helical membrane-spanning segment. Residues 209–230 (QKLLPKSNVYSVSSSSFARTFG) are Cytoplasmic-facing. A helical membrane pass occupies residues 231 to 251 (FASLAVAEILLFIYWTSLSIF). Residues 252–271 (QFGAYAAGVAIMCGIAAKSL) are Lumenal-facing.

The protein resides in the endoplasmic reticulum membrane. This is an uncharacterized protein from Schizosaccharomyces pombe (strain 972 / ATCC 24843) (Fission yeast).